A 315-amino-acid chain; its full sequence is Ribosomal RNA small subunit methyltransferase H (315 aa).

Residues 35–37 (GGH), D55, F79, D101, and Q108 each bind S-adenosyl-L-methionine.

The protein belongs to the methyltransferase superfamily. RsmH family.

It is found in the cytoplasm. The catalysed reaction is cytidine(1402) in 16S rRNA + S-adenosyl-L-methionine = N(4)-methylcytidine(1402) in 16S rRNA + S-adenosyl-L-homocysteine + H(+). Functionally, specifically methylates the N4 position of cytidine in position 1402 (C1402) of 16S rRNA. This Photobacterium profundum (strain SS9) protein is Ribosomal RNA small subunit methyltransferase H.